Consider the following 143-residue polypeptide: MITNLRRRTAMAAAGLGAALGLGILLVPTVDAHLANGSMSEVMMSEIAGLPIPPIIHYGAIAYAPSGASGKAWHQRTPARAEQVALEKCGDKTCKVVSRFTRCGAVAYNGSKYQGGTGLTRRAAEDDAVNRLEGGRIVNWACN.

Positions 1–32 are cleaved as a signal peptide; sequence MITNLRRRTAMAAAGLGAALGLGILLVPTVDA.

This sequence to M.tuberculosis Rv1269c.

This is an uncharacterized protein from Mycobacterium tuberculosis (strain CDC 1551 / Oshkosh).